A 671-amino-acid polypeptide reads, in one-letter code: DNA ligase (671 aa).

NAD(+) contacts are provided by residues 32–36 (DAEYD), 81–82 (SL), and E113. The N6-AMP-lysine intermediate role is filled by K115. NAD(+) is bound by residues R136, E173, K290, and K314. Zn(2+) is bound by residues C408, C411, C426, and C432. Residues 593-671 (EIDSPFAGKT…ETEMLRLLGS (79 aa)) enclose the BRCT domain.

Belongs to the NAD-dependent DNA ligase family. LigA subfamily. Mg(2+) serves as cofactor. The cofactor is Mn(2+).

The catalysed reaction is NAD(+) + (deoxyribonucleotide)n-3'-hydroxyl + 5'-phospho-(deoxyribonucleotide)m = (deoxyribonucleotide)n+m + AMP + beta-nicotinamide D-nucleotide.. DNA ligase that catalyzes the formation of phosphodiester linkages between 5'-phosphoryl and 3'-hydroxyl groups in double-stranded DNA using NAD as a coenzyme and as the energy source for the reaction. It is essential for DNA replication and repair of damaged DNA. The sequence is that of DNA ligase from Escherichia coli O81 (strain ED1a).